The following is a 344-amino-acid chain: Protein-glutamate methylesterase/protein-glutamine glutaminase 1 (344 aa).

Residues 5–122 (RVLVVDDSAT…GTQEALAEIV (118 aa)) enclose the Response regulatory domain. At aspartate 56 the chain carries 4-aspartylphosphate. One can recognise a CheB-type methylesterase domain in the interval 151–343 (FMPSGDIVAI…QSILDLASAR (193 aa)). Active-site residues include serine 163, histidine 189, and aspartate 285.

It belongs to the CheB family. Phosphorylated by CheA. Phosphorylation of the N-terminal regulatory domain activates the methylesterase activity.

It localises to the cytoplasm. The enzyme catalyses [protein]-L-glutamate 5-O-methyl ester + H2O = L-glutamyl-[protein] + methanol + H(+). The catalysed reaction is L-glutaminyl-[protein] + H2O = L-glutamyl-[protein] + NH4(+). Its function is as follows. Involved in chemotaxis. Part of a chemotaxis signal transduction system that modulates chemotaxis in response to various stimuli. Catalyzes the demethylation of specific methylglutamate residues introduced into the chemoreceptors (methyl-accepting chemotaxis proteins or MCP) by CheR. Also mediates the irreversible deamidation of specific glutamine residues to glutamic acid. The sequence is that of Protein-glutamate methylesterase/protein-glutamine glutaminase 1 from Caulobacter vibrioides (strain ATCC 19089 / CIP 103742 / CB 15) (Caulobacter crescentus).